We begin with the raw amino-acid sequence, 414 residues long: Probable tRNA pseudouridine synthase D (414 aa).

Asp90 functions as the Nucleophile in the catalytic mechanism. Positions 162–382 constitute a TRUD domain; the sequence is GFPNFFGVQR…SSGDYRIISA (221 aa).

This sequence belongs to the pseudouridine synthase TruD family.

The catalysed reaction is uridine(13) in tRNA = pseudouridine(13) in tRNA. Functionally, could be responsible for synthesis of pseudouridine from uracil-13 in transfer RNAs. The chain is Probable tRNA pseudouridine synthase D from Picrophilus torridus (strain ATCC 700027 / DSM 9790 / JCM 10055 / NBRC 100828 / KAW 2/3).